Consider the following 121-residue polypeptide: Small ribosomal subunit protein bS6 (121 aa).

Residues 96–121 (DTGPSSMMKTVEREDARKTQQAEYQA) are disordered. Residues 105–115 (TVEREDARKTQ) are compositionally biased toward basic and acidic residues.

This sequence belongs to the bacterial ribosomal protein bS6 family.

Functionally, binds together with bS18 to 16S ribosomal RNA. The sequence is that of Small ribosomal subunit protein bS6 from Albidiferax ferrireducens (strain ATCC BAA-621 / DSM 15236 / T118) (Rhodoferax ferrireducens).